Reading from the N-terminus, the 501-residue chain is Mitogen-activated protein kinase MKC1 (501 aa).

The Protein kinase domain maps to 28 to 339; that stretch reads FKIVKELGHG…VRDALNHKYL (312 aa). ATP is bound by residues 34 to 42 and Lys-74; that span reads LGHGAYGIV. The active-site Proton acceptor is the Asp-174. A Phosphothreonine modification is found at Thr-211. Residues 211-213 carry the TXY motif; the sequence is TEY. Phosphotyrosine is present on Tyr-213. The interval 400-450 is disordered; that stretch reads MQKREEQRQEEEEKELLEQQRQFPAQESMDISQTPYNNLETNIGTPQVEDD. A compositionally biased stretch (polar residues) spans 422–444; it reads FPAQESMDISQTPYNNLETNIGT.

This sequence belongs to the protein kinase superfamily. CMGC Ser/Thr protein kinase family. MAP kinase subfamily. It depends on Mg(2+) as a cofactor. Dually phosphorylated on Thr-211 and Tyr-213, which activates the enzyme.

The catalysed reaction is L-seryl-[protein] + ATP = O-phospho-L-seryl-[protein] + ADP + H(+). It carries out the reaction L-threonyl-[protein] + ATP = O-phospho-L-threonyl-[protein] + ADP + H(+). Its activity is regulated as follows. Activated by tyrosine and threonine phosphorylation. The sequence is that of Mitogen-activated protein kinase MKC1 (MKC1) from Candida albicans (Yeast).